A 222-amino-acid chain; its full sequence is uncharacterized protein (222 aa).

Residues 1 to 27 (MSFTRRKFVLGMGTVIFFTGSASSLLA) constitute a signal peptide (tat-type signal). 3 consecutive 4Fe-4S ferredoxin-type domains span residues 37–66 (YAMIHDESRCNGCNICARACRKTNHAPAQG), 83–114 (TQYHFFRQSCQHCEDAPCIDVCPTGASWRDEQ), and 115–144 (GIVRVEKSQCIGCSYCIGACPYQVRYLNPV). [4Fe-4S] cluster is bound by residues C46, C49, C52, C56, C92, C95, C100, C104, C124, C127, C130, C134, C151, C154, C167, and C171.

In terms of processing, predicted to be exported by the Tat system. The position of the signal peptide cleavage has not been experimentally proven.

This is an uncharacterized protein from Escherichia coli O157:H7.